The following is a 148-amino-acid chain: UPF0178 protein lpg0089 (148 aa).

The protein belongs to the UPF0178 family.

This is UPF0178 protein lpg0089 from Legionella pneumophila subsp. pneumophila (strain Philadelphia 1 / ATCC 33152 / DSM 7513).